The chain runs to 434 residues: ATP-dependent protease ATPase subunit HslU (434 aa).

ATP contacts are provided by residues V18, 60-65 (GVGKTE), D247, E312, and R384.

Belongs to the ClpX chaperone family. HslU subfamily. As to quaternary structure, a double ring-shaped homohexamer of HslV is capped on each side by a ring-shaped HslU homohexamer. The assembly of the HslU/HslV complex is dependent on binding of ATP.

Its subcellular location is the cytoplasm. In terms of biological role, ATPase subunit of a proteasome-like degradation complex; this subunit has chaperone activity. The binding of ATP and its subsequent hydrolysis by HslU are essential for unfolding of protein substrates subsequently hydrolyzed by HslV. HslU recognizes the N-terminal part of its protein substrates and unfolds these before they are guided to HslV for hydrolysis. This is ATP-dependent protease ATPase subunit HslU from Rhodopseudomonas palustris (strain BisB18).